The chain runs to 239 residues: Small ribosomal subunit protein uS2 (239 aa).

The protein belongs to the universal ribosomal protein uS2 family.

This is Small ribosomal subunit protein uS2 from Lysinibacillus sphaericus (strain C3-41).